Reading from the N-terminus, the 326-residue chain is Glyoxalase I (326 aa).

2 VOC domains span residues 22–167 (LLNH…LITY) and 182–322 (KFNH…VVPH). His25 serves as a coordination point for Zn(2+). Arg29 lines the substrate pocket. Glu89 contributes to the Zn(2+) binding site. Residues Asn93, Arg113, His117, and 147–148 (RQ) each bind substrate. His117 contacts Zn(2+). Residue Glu163 coordinates Zn(2+). Active-site proton donor/acceptor residues include Glu163 and Glu318.

Belongs to the glyoxalase I family. In terms of assembly, monomer. Zn(2+) is required as a cofactor.

It carries out the reaction (R)-S-lactoylglutathione = methylglyoxal + glutathione. It functions in the pathway secondary metabolite metabolism; methylglyoxal degradation; (R)-lactate from methylglyoxal: step 1/2. Its function is as follows. Catalyzes the conversion of hemimercaptal, formed from methylglyoxal and glutathione, to S-lactoylglutathione. Can use gamma-glutamylcysteine as a substrate. The sequence is that of Glyoxalase I from Saccharomyces cerevisiae (strain ATCC 204508 / S288c) (Baker's yeast).